We begin with the raw amino-acid sequence, 203 residues long: MSRYRGPRFKKIRRLGALPGLTNKRPKAEKDLINQSRFVKKSQYRIRLEEKQKLRFHYGLTERQLLKYIRIAGKAKGSTGQVLLQLLEMRLDNILFRLGMALTIPAARQLVNHRHVLVNGRIVDIPSYRCKPLDIITAKDKQQSRTLIQNSLNSSPHAKIPNHLTLDLFQYKGIVNQIINSKWVGLKINEFLIVEYYSRQIKT.

The S4 RNA-binding domain maps to 89–152 (MRLDNILFRL…QSRTLIQNSL (64 aa)).

The protein belongs to the universal ribosomal protein uS4 family. In terms of assembly, part of the 30S ribosomal subunit. Contacts protein S5. The interaction surface between S4 and S5 is involved in control of translational fidelity.

It is found in the plastid. Functionally, one of the primary rRNA binding proteins, it binds directly to 16S rRNA where it nucleates assembly of the body of the 30S subunit. In terms of biological role, with S5 and S12 plays an important role in translational accuracy. The sequence is that of Small ribosomal subunit protein uS4c (rps4) from Orobanche minor (Small broomrape).